A 381-amino-acid polypeptide reads, in one-letter code: Homoserine O-acetyltransferase (381 aa).

Residues 47–359 (NAILICHALT…DKGHDAFLLD (313 aa)) form the AB hydrolase-1 domain. Catalysis depends on serine 153, which acts as the Nucleophile. Residue arginine 223 participates in substrate binding. Residues aspartate 320 and histidine 353 contribute to the active site. Residue aspartate 354 coordinates substrate.

It belongs to the AB hydrolase superfamily. MetX family. Homodimer.

It localises to the cytoplasm. It catalyses the reaction L-homoserine + acetyl-CoA = O-acetyl-L-homoserine + CoA. It participates in amino-acid biosynthesis; L-methionine biosynthesis via de novo pathway; O-acetyl-L-homoserine from L-homoserine: step 1/1. Functionally, transfers an acetyl group from acetyl-CoA to L-homoserine, forming acetyl-L-homoserine. The protein is Homoserine O-acetyltransferase of Acidiphilium cryptum (strain JF-5).